A 186-amino-acid polypeptide reads, in one-letter code: Serine hydrolase RBBP9 (186 aa).

Residues 63 to 67 (LHCDE) form an involved in binding to RB1 region. Active-site charge relay system residues include Ser-75, Asp-138, and His-165.

Belongs to the RBBP9 family. As to quaternary structure, interacts with RB1; the interaction disrupts RB1 binding to E2F1. Interacts with RBL1 and RBL2. As to expression, expressed at higher levels in tumor tissues such as carcinoma.

It catalyses the reaction valacyclovir + H2O = acyclovir + L-valine + H(+). Inhibited by the natural product emetine produced by the ipecac root. In terms of biological role, serine hydrolase. Catalyzes the hydrolytic activation of amino acid ester of the antiviral prodrug valacyclovir to its corresponding active drug, acyclovir. May negatively regulate basal or autocrine TGF-beta signaling by suppressing SMAD2-SMAD3 phosphorylation. May play a role in the transformation process due to its capacity to confer resistance to the growth-inhibitory effects of TGF-beta through interaction with RB1 and the subsequent displacement of E2F1. This is Serine hydrolase RBBP9 from Homo sapiens (Human).